Here is a 36-residue protein sequence, read N- to C-terminus: uncharacterized protein (36 aa).

The span at 1 to 14 shows a compositional bias: polar residues; sequence MNQLGSGPTKQGVA. The segment at 1–36 is disordered; it reads MNQLGSGPTKQGVATNTGSTGTTKNNSNLSGKGWVL. Residues 15-36 are compositionally biased toward low complexity; the sequence is TNTGSTGTTKNNSNLSGKGWVL.

This is an uncharacterized protein from Dictyostelium discoideum (Social amoeba).